A 968-amino-acid polypeptide reads, in one-letter code: RNA polymerase-associated protein RapA (968 aa).

One can recognise a Helicase ATP-binding domain in the interval 163–332 (EVGRRYAPRV…FARLRLLDPD (170 aa)). 176-183 (DEVGLGKT) serves as a coordination point for ATP. The DEAH box signature appears at 278–281 (DEAH). The 165-residue stretch at 491 to 655 (RVDWLIEFLK…EFAEDLLNVL (165 aa)) folds into the Helicase C-terminal domain.

This sequence belongs to the SNF2/RAD54 helicase family. RapA subfamily. As to quaternary structure, interacts with the RNAP. Has a higher affinity for the core RNAP than for the holoenzyme. Its ATPase activity is stimulated by binding to RNAP.

In terms of biological role, transcription regulator that activates transcription by stimulating RNA polymerase (RNAP) recycling in case of stress conditions such as supercoiled DNA or high salt concentrations. Probably acts by releasing the RNAP, when it is trapped or immobilized on tightly supercoiled DNA. Does not activate transcription on linear DNA. Probably not involved in DNA repair. The sequence is that of RNA polymerase-associated protein RapA from Shewanella sp. (strain ANA-3).